A 466-amino-acid polypeptide reads, in one-letter code: Soluble pyridine nucleotide transhydrogenase (466 aa).

FAD is bound at residue 36-45; it reads ERYHNVGGGC.

It belongs to the class-I pyridine nucleotide-disulfide oxidoreductase family. Requires FAD as cofactor.

It localises to the cytoplasm. The catalysed reaction is NAD(+) + NADPH = NADH + NADP(+). In terms of biological role, conversion of NADPH, generated by peripheral catabolic pathways, to NADH, which can enter the respiratory chain for energy generation. The polypeptide is Soluble pyridine nucleotide transhydrogenase (Enterobacter sp. (strain 638)).